Reading from the N-terminus, the 382-residue chain is Dual-specificity RNA methyltransferase RlmN (382 aa).

Residue Glu96 is the Proton acceptor of the active site. Positions 102 to 342 constitute a Radical SAM core domain; that stretch reads QGKRGTLCVS…VRTTRGEDID (241 aa). Cys109 and Cys345 are oxidised to a cystine. [4Fe-4S] cluster is bound by residues Cys116, Cys120, and Cys123. Residues 170–171, Ser202, 224–226, and Asn302 each bind S-adenosyl-L-methionine; these read GE and SLH. Cys345 serves as the catalytic S-methylcysteine intermediate.

Belongs to the radical SAM superfamily. RlmN family. Requires [4Fe-4S] cluster as cofactor.

It localises to the cytoplasm. The catalysed reaction is adenosine(2503) in 23S rRNA + 2 reduced [2Fe-2S]-[ferredoxin] + 2 S-adenosyl-L-methionine = 2-methyladenosine(2503) in 23S rRNA + 5'-deoxyadenosine + L-methionine + 2 oxidized [2Fe-2S]-[ferredoxin] + S-adenosyl-L-homocysteine. It catalyses the reaction adenosine(37) in tRNA + 2 reduced [2Fe-2S]-[ferredoxin] + 2 S-adenosyl-L-methionine = 2-methyladenosine(37) in tRNA + 5'-deoxyadenosine + L-methionine + 2 oxidized [2Fe-2S]-[ferredoxin] + S-adenosyl-L-homocysteine. Functionally, specifically methylates position 2 of adenine 2503 in 23S rRNA and position 2 of adenine 37 in tRNAs. m2A2503 modification seems to play a crucial role in the proofreading step occurring at the peptidyl transferase center and thus would serve to optimize ribosomal fidelity. The chain is Dual-specificity RNA methyltransferase RlmN from Pseudomonas syringae pv. tomato (strain ATCC BAA-871 / DC3000).